We begin with the raw amino-acid sequence, 336 residues long: Protein ABHD13 (336 aa).

A helical; Signal-anchor for type II membrane protein membrane pass occupies residues 37-57 (FNMYGGVILLLLIFVSIAGIL). Catalysis depends on charge relay system residues Ser193, Asp268, and His298. The N-linked (GlcNAc...) asparagine glycan is linked to Asn299.

This sequence belongs to the serine esterase family.

Its subcellular location is the membrane. The polypeptide is Protein ABHD13 (Xenopus laevis (African clawed frog)).